A 569-amino-acid polypeptide reads, in one-letter code: Rab GTPase-binding effector protein 2 (569 aa).

Disordered regions lie at residues 1-38 (MAAAAPVAADDDERRRRPGAALEDSRPQEGANGEAELG), 181-267 (QRRP…ASLV), and 388-414 (RAEQLPSSAPQGPQQEQGEEESLPSSV). A2 carries the post-translational modification N-acetylalanine. The span at 29–38 (EGANGEAELG) shows a compositional bias: low complexity. Residues 34–184 (EAELGELSRL…ELIQEIQRRP (151 aa)) adopt a coiled-coil conformation. Residues S189, S193, S200, and S204 each carry the phosphoserine modification. Positions 245-257 (SSSSLPRSRQGLS) are enriched in low complexity. Residues 292-391 (WEQLQMEGRQ…EENQGLRAEQ (100 aa)) adopt a coiled-coil conformation. Over residues 393-403 (PSSAPQGPQQE) the composition is skewed to low complexity. A coiled-coil region spans residues 423–523 (RTRQEARAQL…LQAELETSEQ (101 aa)).

The protein belongs to the rabaptin family. In terms of assembly, heterodimer with RABGEF1. The dimer binds RAB5A that has been activated by GTP-binding. Interacts with SDCCAG8; this interaction is important for ciliogenesis regulation. Interacts with RAB4; this interaction may mediate VEGFR2 cell surface expression.

Its subcellular location is the cytoplasm. The protein resides in the early endosome. It is found in the cytoskeleton. It localises to the microtubule organizing center. The protein localises to the centrosome. Its subcellular location is the cilium basal body. In terms of biological role, plays a role in membrane trafficking and in homotypic early endosome fusion. Participates in arteriogenesis by regulating vascular endothelial growth factor receptor 2/VEGFR2 cell surface expression and endosomal trafficking. By interacting with SDCCAG8, localizes to centrosomes and plays a critical role in ciliogenesis. The polypeptide is Rab GTPase-binding effector protein 2 (RABEP2) (Pongo abelii (Sumatran orangutan)).